The chain runs to 364 residues: Phosphoserine aminotransferase (364 aa).

Residue Arg42 participates in L-glutamate binding. Pyridoxal 5'-phosphate is bound by residues 76 to 77 (GR), Trp102, Thr156, Asp175, and Gln198. N6-(pyridoxal phosphate)lysine is present on Lys199. 240–241 (NT) is a binding site for pyridoxal 5'-phosphate.

This sequence belongs to the class-V pyridoxal-phosphate-dependent aminotransferase family. SerC subfamily. In terms of assembly, homodimer. Pyridoxal 5'-phosphate serves as cofactor.

Its subcellular location is the cytoplasm. The catalysed reaction is O-phospho-L-serine + 2-oxoglutarate = 3-phosphooxypyruvate + L-glutamate. It carries out the reaction 4-(phosphooxy)-L-threonine + 2-oxoglutarate = (R)-3-hydroxy-2-oxo-4-phosphooxybutanoate + L-glutamate. It participates in amino-acid biosynthesis; L-serine biosynthesis; L-serine from 3-phospho-D-glycerate: step 2/3. Its pathway is cofactor biosynthesis; pyridoxine 5'-phosphate biosynthesis; pyridoxine 5'-phosphate from D-erythrose 4-phosphate: step 3/5. Catalyzes the reversible conversion of 3-phosphohydroxypyruvate to phosphoserine and of 3-hydroxy-2-oxo-4-phosphonooxybutanoate to phosphohydroxythreonine. This is Phosphoserine aminotransferase from Shewanella woodyi (strain ATCC 51908 / MS32).